The primary structure comprises 208 residues: Small ribosomal subunit protein eS8 (208 aa).

The disordered stretch occupies residues 1–33 (MGISRDHWHKRRATGGKRKPIRKKRKFELGRPA). A compositionally biased stretch (basic residues) spans 7 to 26 (HWHKRRATGGKRKPIRKKRK).

Belongs to the eukaryotic ribosomal protein eS8 family.

The polypeptide is Small ribosomal subunit protein eS8 (RpS8) (Apis mellifera (Honeybee)).